The following is a 242-amino-acid chain: Demethylmenaquinone methyltransferase (242 aa).

S-adenosyl-L-methionine-binding positions include T62, D83, and 112–113 (DV).

Belongs to the class I-like SAM-binding methyltransferase superfamily. MenG/UbiE family.

The enzyme catalyses a 2-demethylmenaquinol + S-adenosyl-L-methionine = a menaquinol + S-adenosyl-L-homocysteine + H(+). Its pathway is quinol/quinone metabolism; menaquinone biosynthesis; menaquinol from 1,4-dihydroxy-2-naphthoate: step 2/2. In terms of biological role, methyltransferase required for the conversion of demethylmenaquinol (DMKH2) to menaquinol (MKH2). The sequence is that of Demethylmenaquinone methyltransferase from Protochlamydia amoebophila (strain UWE25).